Here is a 931-residue protein sequence, read N- to C-terminus: Adhesion G protein-coupled receptor E1 (931 aa).

The signal sequence occupies residues 1-27; it reads MWGFWLLLFWGFSGMYRWGMTTLPTLG. Over 28 to 644 the chain is Extracellular; that stretch reads QTLGGVNECQ…IMASGELTME (617 aa). EGF-like domains are found at residues 32–80 and 81–132; these read GVNE…VECQ and DVNE…FLCA. 21 disulfides stabilise this stretch: Cys-36-Cys-48, Cys-42-Cys-57, Cys-59-Cys-79, Cys-85-Cys-98, Cys-92-Cys-107, Cys-109-Cys-131, Cys-137-Cys-149, Cys-143-Cys-158, Cys-160-Cys-171, Cys-177-Cys-189, Cys-183-Cys-198, Cys-200-Cys-220, Cys-226-Cys-239, Cys-233-Cys-248, Cys-250-Cys-270, Cys-276-Cys-286, Cys-280-Cys-295, Cys-297-Cys-317, Cys-323-Cys-336, Cys-330-Cys-345, and Cys-347-Cys-366. The EGF-like 3; calcium-binding domain maps to 133 to 172; that stretch reads DVDECLTIGICPKYSNCSNSVGSYSCTCQPGFVLNGSICE. 2 N-linked (GlcNAc...) asparagine glycosylation sites follow: Asn-148 and Asn-167. Positions 173 to 221 constitute an EGF-like 4; calcium-binding domain; it reads DEDECVTRDVCPEHATCHNTLGSYYCTCNSGLESSGGGPMFQGLDESCE. Positions 222 to 271 constitute an EGF-like 5; calcium-binding domain; that stretch reads DVDECSRNSTLCGPTFICINTLGSYSCSCPAGFSLPTFQILGHPADGNCT. N-linked (GlcNAc...) asparagine glycosylation occurs at Asn-229. Residues Asn-269 and Asn-283 are each glycosylated (N-linked (GlcNAc...) asparagine). Residues 272-318 form the EGF-like 6; calcium-binding domain; the sequence is DIDECDDTCPLNSSCTNTIGSYFCTCHPGFASSNGQLNFKDLEVTCE. In terms of domain architecture, EGF-like 7; calcium-binding spans 319–367; the sequence is DIDECTQDPLQCGLNSVCTNVPGSYICGCLPDFQMDPEGSQGYGNFNCK. 4 N-linked (GlcNAc...) asparagine glycosylation sites follow: Asn-405, Asn-417, Asn-474, and Asn-498. Positions 482–642 constitute a GAIN-B domain; it reads EYLDIESKVI…AIIMASGELT (161 aa). The Cell attachment site motif lies at 506-508; sequence RGD. Intrachain disulfides connect Cys-595–Cys-624 and Cys-612–Cys-626. Residues 595-642 are GPS; it reads CVSWNTDVEDGRWTPSGCEIVEASETHTVCSCNRMANLAIIMASGELT. A helical membrane pass occupies residues 645-672; it reads FSLYIISHVGTVISLVCLALAIATFLLC. The Cytoplasmic segment spans residues 673–679; it reads RAVQNHN. A helical transmembrane segment spans residues 680–701; sequence TYMHLHLCVCLFLAKILFLTGI. The Extracellular segment spans residues 702–711; the sequence is DKTDNQTACA. An N-linked (GlcNAc...) asparagine glycan is attached at Asn-706. Residues 712–735 traverse the membrane as a helical segment; it reads IIAGFLHYLFLACFFWMLVEAVML. Residues 736–754 are Cytoplasmic-facing; the sequence is FLMVRNLKVVNYFSSRNIK. A helical transmembrane segment spans residues 755 to 776; that stretch reads MLHLCAFGYGLPVLVVIISASV. The Extracellular segment spans residues 777–792; sequence QPRGYGMHNRCWLNTE. Residues 793–821 traverse the membrane as a helical segment; the sequence is TGFIWSFLGPVCMIITINSVLLAWTLWVL. At 822-839 the chain is on the cytoplasmic side; that stretch reads RQKLCSVSSEVSKLKDTR. Residues 840–859 traverse the membrane as a helical segment; the sequence is LLTFKAIAQIFILGCSWVLG. Residues 860 to 874 lie on the Extracellular side of the membrane; the sequence is IFQIGPLASIMAYLF. The helical transmembrane segment at 875–897 threads the bilayer; it reads TIINSLQGAFIFLIHCLLNRQVR. Residues 898–931 lie on the Cytoplasmic side of the membrane; that stretch reads DEYKKLLTRKTDLSSHSQTSGILLSSMPSTSKMG.

The protein belongs to the G-protein coupled receptor 2 family. Adhesion G-protein coupled receptor (ADGR) subfamily. As to expression, in macrophages; but absent from those which are localized within T-cell areas of lymph nodes and spleen. Low level of expression on blood monocytes.

The protein resides in the cell membrane. In terms of biological role, orphan receptor involved in cell adhesion and probably in cell-cell interactions specifically involving cells of the immune system. May play a role in regulatory T-cells (Treg) development. The chain is Adhesion G protein-coupled receptor E1 (Adgre1) from Mus musculus (Mouse).